The following is a 960-amino-acid chain: ATPase 4, plasma membrane-type (960 aa).

The Cytoplasmic portion of the chain corresponds to 1–69 (MTTTVEDNRE…EKKESKFLKF (69 aa)). A helical membrane pass occupies residues 70–89 (LGFMWNPLSWVMEAAAIMAI). The Extracellular portion of the chain corresponds to 90-101 (ALANGGGKPPDW). The chain crosses the membrane as a helical span at residues 102-122 (QDFVGIITLLVINSTISFIEE). Over 123–251 (NNAGNAAAAL…GHFQQVLTAI (129 aa)) the chain is Cytoplasmic. A helical transmembrane segment spans residues 252 to 272 (GNFCICSIAVGMLIEIVVMYP). The Extracellular segment spans residues 273-281 (IQHRAYRPG). The chain crosses the membrane as a helical span at residues 282-299 (IDNLLVLLIGGIPIAMPT). Over 300–651 (VLSVTMAIGS…TSRAIFQRMK (352 aa)) the chain is Cytoplasmic. The 4-aspartylphosphate intermediate role is filled by Asp337. Mg(2+)-binding residues include Asp596 and Asp600. A helical membrane pass occupies residues 652–673 (NYTIYAVSITIRIVLGFMLLAL). Residues 674-678 (IWQFD) lie on the Extracellular side of the membrane. The helical transmembrane segment at 679 to 701 (FPPFMVLIIAILNDGTIMTISKD) threads the bilayer. Residues 702-717 (RVKPSPLPDSWKLSEI) lie on the Cytoplasmic side of the membrane. Residues 718 to 738 (FATGVVFGSYMAMMTVIFFWV) traverse the membrane as a helical segment. Residues 739 to 763 (SYKTDFFPRTFGVATLEKTAHDDFR) are Extracellular-facing. A helical membrane pass occupies residues 764 to 784 (KLASAIYLQVSIISQALIFVT). Topologically, residues 785 to 796 (RSRSWSFVERPG) are cytoplasmic. Residues 797–817 (IFLMIAFILAQLVATLIAVYA) form a helical membrane-spanning segment. Topologically, residues 818–825 (NWSFAAIE) are extracellular. The chain crosses the membrane as a helical span at residues 826 to 846 (GIGWGWAGVIWLYNIIFYIPL). Topologically, residues 847–960 (DFIKFFIRYA…IETIQQAYTV (114 aa)) are cytoplasmic. Thr893 carries the post-translational modification Phosphothreonine. The residue at position 942 (Ser942) is a Phosphoserine. The tract at residues 958-960 (YTV) is interaction with 14-3-3 proteins. Position 959 is a phosphothreonine (Thr959).

This sequence belongs to the cation transport ATPase (P-type) (TC 3.A.3) family. Type IIIA subfamily. In terms of assembly, binds to 14-3-3 proteins. The binding is induced by phosphorylation of Thr-959. Binding to 14-3-3 proteins activates the H(+)-ATPase. Expressed in guard cells and roots.

The protein localises to the cell membrane. It carries out the reaction ATP + H2O + H(+)(in) = ADP + phosphate + 2 H(+)(out). Functionally, the plasma membrane H(+) ATPase of plants and fungi generates a proton gradient that drives the active transport of nutrients by H(+)-symport. The resulting external acidification and/or internal alkinization may mediate growth responses. The sequence is that of ATPase 4, plasma membrane-type (AHA4) from Arabidopsis thaliana (Mouse-ear cress).